Reading from the N-terminus, the 471-residue chain is MVQKVEARGGEIGDVWDDGAYDGVRKVYVGQGEDGIAFVKFEYVNGSQEVVGDERGKKTLLGAEEFEVDPDDYIVYVEGYHEKVFGVTTKEIISTLTFKTYKGKTSPPFGIVSGTKFVLQGGKIVGFHGRSTDVLHSLGAYISSPATPKLRGKWIKVEQKGEGPGPRCSHDIAQVGNKIFSFGGELTPNQPIDKHLYVFDLETRTWSISPATGDVPNLSCLGVRMVSIGSSLYVFGGRDASRKYNGFYSFDTTKNEWKLLTPVEQGPTPRSFHSMTADENNVYVFGGVSATVRLKTLDAYNIVDHKWVQCSTPGGSCSVRGGAGLEVVQGKVWVVYGFNGCEVDDVHCYDPAQDKWTQVETFGEKPCARSVFASAVVGKHILVFGGEIAMDPKAHEGPGQLSGGTFALDTETLKWEKLDKLGEEEETPSIRGWSASTTGTIDGKKGLVMFGGKAQTNDRFGDLFFYGVDSA.

The Jacalin-type lectin domain maps to 2-144 (VQKVEARGGE…LHSLGAYISS (143 aa)). Kelch repeat units lie at residues 178–226 (KIFS…VRMV), 231–277 (SLYV…SMTA), 281–330 (NVYV…VVQG), 332–379 (VWVV…VVGK), 381–435 (ILVF…GWSA), and 446–471 (GLVM…VDSA). Arg-238 functions as the Proton donor in the catalytic mechanism. Residues Arg-238, Ser-271, Arg-293, Gly-322, and Val-371 each coordinate a (Z)-N-(sulfonatooxy)alkanimidothioate. Arg-293 serves as the catalytic Proton donor. Fe(2+) is bound by residues Glu-387, Asp-391, and His-395. Trp-433 lines the a (Z)-N-(sulfonatooxy)alkanimidothioate pocket.

Belongs to the jacalin lectin family. The cofactor is Fe(2+). In terms of tissue distribution, expressed only in seeds.

It carries out the reaction a (Z)-N-(sulfonatooxy)alkanimidothioate = a nitrile + sulfur + sulfate. It catalyses the reaction (Z)-phenyl-N-(sulfonatooxy)methanimidothioate = phenylacetonitrile + sulfur + sulfate. The catalysed reaction is (Z)-N-(sulfonatooxy)prop-2-enimidothioate = but-3-enenitrile + sulfur + sulfate. The enzyme catalyses (Z)-(indol-3-yl)-N-(sulfonatooxy)methanimidothioate = (indol-3-yl)acetonitrile + sulfur + sulfate. Its activity is regulated as follows. The presence of Fe(2+) supports lyase activity in a dose-dependent manner with both benzylglucosinolate and 2-propenylglucosinolate as substrates. More active at pH 7.4 than at pH 6. Specifier protein responsible for constitutive and herbivore-induced simple nitrile formation, especially in seeds. Promotes simple nitriles, but not epithionitrile or thiocyanate formation. Converts allylglucosinolate (allyl-GSL), 2-propenylglucosinolate (sinigrin), indol-3-ylmethylglucosinolate (glucobrassicin), benzylisothiocyanate and benzylglucosinolate (glucotropaeolin) to their corresponding simple nitriles in the presence of myrosinase. Catalyzes mainly the conversion of benzylisothiocyanate when benzylglucosinolate is used as the initial substrate of myrosinase. Involved in the regulation of glucosinolate content in seeds, during stratification and germination. This chain is Thiohydroximate-O-sulfate sulfur/sulfate-lyase (nitrile-forming) NSP2, found in Arabidopsis thaliana (Mouse-ear cress).